Here is a 264-residue protein sequence, read N- to C-terminus: MASVSSKIFAITGGASGIGAATCHLLARRGAAALCIGDLSNENMKQLEKSIREINPETKVHCTVLDVSSSSEVDKWVKDIISTFGDLHGAANVAGIAQGAGMRQIPTLLEEDDEQWKKVFQVNLDGILYATRAQVRAMKDSSSTSPGDRSIVNVASIASMAHMPDVFAYGTSKAGCAYFTTCVAQDVIPLGIRANTVSPGITRTPMLPRFVPNAKTQEEVEETYKKEGFSVIEADDVARTIVWLLSEDSRPVFGTNINVGACMP.

An N-terminal signal peptide occupies residues 1 to 20 (MASVSSKIFAITGGASGIGA). The NADP(+) site is built by I18, D66, R132, Y169, K173, and T204. Y169 (proton donor) is an active-site residue. Catalysis depends on K173, which acts as the Lowers pKa of active site Tyr.

Belongs to the short-chain dehydrogenases/reductases (SDR) family. As to quaternary structure, homotetramer.

The catalysed reaction is chanoclavine-I + NAD(+) = chanoclavine-I aldehyde + NADH + H(+). It participates in alkaloid biosynthesis; ergot alkaloid biosynthesis. Functionally, chanoclavine-I dehydrogenase; part of the gene cluster that mediates the biosynthesis of fungal ergot alkaloid. DmaW catalyzes the first step of ergot alkaloid biosynthesis by condensing dimethylallyl diphosphate (DMAP) and tryptophan to form 4-dimethylallyl-L-tryptophan. The second step is catalyzed by the methyltransferase easF that methylates 4-dimethylallyl-L-tryptophan in the presence of S-adenosyl-L-methionine, resulting in the formation of 4-dimethylallyl-L-abrine. The catalase easC and the FAD-dependent oxidoreductase easE then transform 4-dimethylallyl-L-abrine to chanoclavine-I which is further oxidized by easD in the presence of NAD(+), resulting in the formation of chanoclavine-I aldehyde. Chanoclavine-I aldehyde is the precursor of ergoamides and ergopeptines in Clavicipitaceae, and clavine-type alcaloids such as fumiclavine in Trichocomaceae. However, the metabolites downstream of chanoclavine-I aldehyde in Arthrodermataceae have not been identified yet. The sequence is that of Chanoclavine-I dehydrogenase easD from Arthroderma otae (strain ATCC MYA-4605 / CBS 113480) (Microsporum canis).